The following is a 324-amino-acid chain: MQDLIDSPTAARTPAEEKIRHEGNKLSKRLARETTRAIADYNMIEAGDRVMVCLSGGKDSYALLDILLSLRKRAPFSFDIVAVNLDQKQPGFPPEVLPNYLTSLGVPFHIETQDTYSIVTRVIPEGKTMCSLCSRLRRGILYRVAGELGATKIALGHHRDDILATFFLNLFYGGKAKAMPPKLVSDDGRHTVIRPLAYVPEHDLVAYAKFKQFPIIPCNLCGSQENLKRQEVSRMIQEWDRRHPGRSWNVFNALSRIVPSHLMDRDLFDFAGLKPTGRPDANGDTAFDPIDPEDPREDAGDACASSPADGDAAMAEQKVVFARL.

Positions 1–26 (MQDLIDSPTAARTPAEEKIRHEGNKL) are disordered. The segment covering 14 to 26 (PAEEKIRHEGNKL) has biased composition (basic and acidic residues). Positions 55–60 (SGGKDS) match the PP-loop motif motif. Residues cysteine 130, cysteine 133, and cysteine 221 each contribute to the [4Fe-4S] cluster site. The interval 278 to 310 (RPDANGDTAFDPIDPEDPREDAGDACASSPADG) is disordered.

This sequence belongs to the TtcA family. Homodimer. The cofactor is Mg(2+). [4Fe-4S] cluster is required as a cofactor.

It is found in the cytoplasm. The enzyme catalyses cytidine(32) in tRNA + S-sulfanyl-L-cysteinyl-[cysteine desulfurase] + AH2 + ATP = 2-thiocytidine(32) in tRNA + L-cysteinyl-[cysteine desulfurase] + A + AMP + diphosphate + H(+). It functions in the pathway tRNA modification. Its function is as follows. Catalyzes the ATP-dependent 2-thiolation of cytidine in position 32 of tRNA, to form 2-thiocytidine (s(2)C32). The sulfur atoms are provided by the cysteine/cysteine desulfurase (IscS) system. The chain is tRNA-cytidine(32) 2-sulfurtransferase from Bordetella petrii (strain ATCC BAA-461 / DSM 12804 / CCUG 43448).